We begin with the raw amino-acid sequence, 389 residues long: Chitin-binding protein CbpD (389 aa).

The N-terminal stretch at 1-25 is a signal peptide; it reads MKHYSATLALLPLTLALFLPQAAHA. Positions 26–208 constitute a Chitin-binding type-4 domain; the sequence is HGSMETPPSR…EAFYACIDVS (183 aa).

Can be detected in the extracellular supernatant as a 43 kDa protein and a 23 kDa protein, both proteins have the same N-terminus. Only the larger protein binds chitin, which may protect it from further processing and/or degradation by elastase (lasB). It is not clear whether the short form is functional or a degradation product.

It is found in the secreted. Functionally, binds chitin but does not hydrolyze it, has no detectable protease or staphylolytic activity. This Pseudomonas aeruginosa (strain ATCC 15692 / DSM 22644 / CIP 104116 / JCM 14847 / LMG 12228 / 1C / PRS 101 / PAO1) protein is Chitin-binding protein CbpD.